Here is a 240-residue protein sequence, read N- to C-terminus: Methylthioribulose-1-phosphate dehydratase (240 aa).

Cys-99 serves as a coordination point for substrate. Residues His-116 and His-118 each coordinate Zn(2+). Glu-145 acts as the Proton donor/acceptor in catalysis. Residue His-201 coordinates Zn(2+).

This sequence belongs to the aldolase class II family. MtnB subfamily. Zn(2+) serves as cofactor.

It localises to the cytoplasm. The enzyme catalyses 5-(methylsulfanyl)-D-ribulose 1-phosphate = 5-methylsulfanyl-2,3-dioxopentyl phosphate + H2O. The protein operates within amino-acid biosynthesis; L-methionine biosynthesis via salvage pathway; L-methionine from S-methyl-5-thio-alpha-D-ribose 1-phosphate: step 2/6. Its function is as follows. Catalyzes the dehydration of methylthioribulose-1-phosphate (MTRu-1-P) into 2,3-diketo-5-methylthiopentyl-1-phosphate (DK-MTP-1-P). The chain is Methylthioribulose-1-phosphate dehydratase from Paracoccidioides brasiliensis (strain Pb18).